Consider the following 554-residue polypeptide: GPI alpha-1,2-mannosyltransferase 3 (554 aa).

Residue asparagine 26 is glycosylated (N-linked (GlcNAc...) asparagine). A run of 9 helical transmembrane segments spans residues 63–83 (LLLFTIALRILNCFLVQTSFV), 136–156 (VQLLIWIPRLAQALLSAVADV), 192–212 (LTNTMETVLTIIALFYYPLEG), 224–244 (LVALAFIIRPTAVILWTPLLF), 255–275 (DLILHHFLPVGFVTLSLSLMI), 315–335 (GFPVILGTHLPFFIHGCYLAP), 340–360 (ILLVTVLWTLLVYSMLSHKEF), 362–382 (FIYPVLPFCMVFCGYSLTHLK), and 387–407 (PALSFLFLSNLFLALYTGLVH). Asparagine 427 carries an N-linked (GlcNAc...) asparagine glycan.

It belongs to the glycosyltransferase 22 family. PIGB subfamily.

It localises to the endoplasmic reticulum membrane. The protein operates within glycolipid biosynthesis; glycosylphosphatidylinositol-anchor biosynthesis. Its function is as follows. Alpha-1,2-mannosyltransferase that catalyzes the transfer of the third mannose, via an alpha-1,2 bond, from a dolichol-phosphate-mannose (Dol-P-Man) to an alpha-D-Man-(1-&gt;6)-2-PEtn-alpha-D-Man-(1-&gt;4)-alpha-D-GlcN-(1-&gt;6)-(1-radyl,2-acyl-sn-glycero-3-phospho)-2-acyl-inositol intermediate to generate an alpha-D-Man-(1-&gt;2)-alpha-D-Man-(1-&gt;6)-2-PEtn-alpha-D-Man-(1-&gt;4)-alpha-D-GlcN-(1-&gt;6)-(1-radyl,2-acyl-sn-glycero-3-phospho)-2-acyl-inositol (also termed H6) and participates in the nineth step of the glycosylphosphatidylinositol-anchor biosynthesis. May also add the third mannose to an alpha-D-Man-(1-&gt;6)-alpha-D-Man-(1-&gt;4)-alpha-D-GlcN-(1-&gt;6)-(1-radyl,2-acyl-sn-glycero-3-phospho)-2-acyl-inositol (also termed H3) intermediate generating an alpha-D-Man-(1-&gt;2)-alpha-D-Man-(1-&gt;6)-alpha-D-Man-(1-&gt;4)-alpha-D-GlcN-(1-&gt;6)-(1-radyl,2-acyl-sn-glycero-3-phospho)-2-acyl-inositol (also termed H4). The polypeptide is GPI alpha-1,2-mannosyltransferase 3 (Homo sapiens (Human)).